The chain runs to 219 residues: uncharacterized protein (219 aa).

D58 is an active-site residue.

It belongs to the pseudouridine synthase RluA family.

The catalysed reaction is a uridine in RNA = a pseudouridine in RNA. This is an uncharacterized protein from Zymomonas mobilis subsp. mobilis (strain ATCC 31821 / ZM4 / CP4).